Consider the following 371-residue polypeptide: Chaperone protein DnaJ (371 aa).

The 65-residue stretch at 5–69 (DYYEVLGLSK…QKRAQYDQFG (65 aa)) folds into the J domain. A CR-type zinc finger spans residues 133-215 (GKELNVEIPV…CHGSGKVRKR (83 aa)). Zn(2+)-binding residues include cysteine 146, cysteine 149, cysteine 163, cysteine 166, cysteine 189, cysteine 192, cysteine 203, and cysteine 206. 4 CXXCXGXG motif repeats span residues 146 to 153 (CDTCKGSG), 163 to 170 (CKHCSGSG), 189 to 196 (CSHCSGTG), and 203 to 210 (CTTCHGSG).

This sequence belongs to the DnaJ family. As to quaternary structure, homodimer. Zn(2+) is required as a cofactor.

The protein resides in the cytoplasm. Its function is as follows. Participates actively in the response to hyperosmotic and heat shock by preventing the aggregation of stress-denatured proteins and by disaggregating proteins, also in an autonomous, DnaK-independent fashion. Unfolded proteins bind initially to DnaJ; upon interaction with the DnaJ-bound protein, DnaK hydrolyzes its bound ATP, resulting in the formation of a stable complex. GrpE releases ADP from DnaK; ATP binding to DnaK triggers the release of the substrate protein, thus completing the reaction cycle. Several rounds of ATP-dependent interactions between DnaJ, DnaK and GrpE are required for fully efficient folding. Also involved, together with DnaK and GrpE, in the DNA replication of plasmids through activation of initiation proteins. In Bacillus anthracis (strain A0248), this protein is Chaperone protein DnaJ.